The chain runs to 142 residues: uncharacterized protein (142 aa).

An N-acetyltransferase domain is found at 1–120 (MADKFDANDE…TILKWEKNMD (120 aa)).

The protein belongs to the acetyltransferase family.

This is an uncharacterized protein from Streptococcus pyogenes serotype M3 (strain ATCC BAA-595 / MGAS315).